The following is a 129-amino-acid chain: MKYFVVALALVAAFACIAESKPAESEHELAEVEEENELADLEDAVWLEHLADLSDLEEARGFFGNTWKKIKGKADKIMLKKAVKIMVKKEGITKEEAQAKVDAMSKKQIRLYLLKYYGKKALQKASEKL.

The signal sequence occupies residues 1 to 20 (MKYFVVALALVAAFACIAES). Positions 21–60 (KPAESEHELAEVEEENELADLEDAVWLEHLADLSDLEEAR) are excised as a propeptide. A Processing quadruplet motif motif is present at residues 57 to 60 (EEAR).

Cleavage of the propeptide depends on the processing quadruplet motif (XXXR, with at least one of X being E). In terms of tissue distribution, expressed by the venom gland.

The protein localises to the secreted. Insecticidal, cytolytic and antimicrobial peptide. Forms voltage-dependent, ion-permeable channels in membranes. At high concentration causes cell membrane lysis. The sequence is that of M-zodatoxin-Lt8d (cit 1-4) from Lachesana tarabaevi (Spider).